The primary structure comprises 859 residues: MNKAISDLSAHTPMMQQYWKLKNQHLDQLMFYRMGDFYEIFYEDAKKAAKLLDITLTARGQSAGQSIPMCGIPYHAAEGYLAKLVKLGESVVICEQIGDPATSKGPVDRQVVRIITPGTISDEALLDERRDNLIAAVLGDERLFGLAVLDITSGNFSVLEIKGWENLLAELERINPVELLIPDDWPPGLPAEKRRGSRRRAPWDFERDSAHKSLCQQFATQDLKGFGCENLTLAIGAAGCLLSYAKETQRTALPHLRSLRHERLDDTVILDAASRRNLELDTNLSGGRDNTLQSVMDRCQTAMGTRLLTRWLNRPLRDLTILQARQTSITCFLERYRFENLQPQLKEIGDIERILARIGLRNARPRDLARLRDALSALPELQQAMSDLDAPHLQQLAQTAGTYPELADLLQRAIIDNPPAVIRDGGVLKTGYDAELDDLQSLSENAGQFLIDLEAREKARTGLGNLKVGYNRVHGYFIELPSKQAEQAPADYIRRQTLKGAERFITPELKEFEDKALSAKSRALAREKMLYETLLEDLIGHLAPLQDTAAALAELDVLSNLAERALNLDLNCPRFVAEPCMRIEQGRHPVVEQVLSTPFVANDLALDDSTRMLVITGPNMGGKSTYMRQTALIVLLAHIGSFVPAASCELSLVDRIFTRIGSSDDLAGGRSTFMVEMSETANILHNATDKSLVLMDEVGRGTSTFDGLSLAWAAAECLAQLRAYTLFATHYFELTVLPESEPLVTNVHLNATEHNERIVFLHRVLPGPASQSYGLAVAQLAGVPGKVISRAKEHLQRLETTSLPHEQPRAKPGKPAVPQQSDMFASLPHPVLDELSKVKVDDMTPRQALDLLYTLQTRL.

An ATP-binding site is contributed by 617–624 (GPNMGGKS). The segment at 799 to 821 (ETTSLPHEQPRAKPGKPAVPQQS) is disordered.

It belongs to the DNA mismatch repair MutS family.

Its function is as follows. This protein is involved in the repair of mismatches in DNA. It is possible that it carries out the mismatch recognition step. This protein has a weak ATPase activity. This Pseudomonas syringae pv. syringae (strain B728a) protein is DNA mismatch repair protein MutS.